Here is a 293-residue protein sequence, read N- to C-terminus: 4-hydroxy-tetrahydrodipicolinate synthase (293 aa).

Position 47 (threonine 47) interacts with pyruvate. Tyrosine 136 (proton donor/acceptor) is an active-site residue. Lysine 164 (schiff-base intermediate with substrate) is an active-site residue. A pyruvate-binding site is contributed by isoleucine 206.

The protein belongs to the DapA family. As to quaternary structure, homotetramer; dimer of dimers.

The protein resides in the cytoplasm. It catalyses the reaction L-aspartate 4-semialdehyde + pyruvate = (2S,4S)-4-hydroxy-2,3,4,5-tetrahydrodipicolinate + H2O + H(+). It participates in amino-acid biosynthesis; L-lysine biosynthesis via DAP pathway; (S)-tetrahydrodipicolinate from L-aspartate: step 3/4. Functionally, catalyzes the condensation of (S)-aspartate-beta-semialdehyde [(S)-ASA] and pyruvate to 4-hydroxy-tetrahydrodipicolinate (HTPA). This Listeria monocytogenes serotype 4a (strain HCC23) protein is 4-hydroxy-tetrahydrodipicolinate synthase.